Reading from the N-terminus, the 294-residue chain is Bifunctional protein FolD (294 aa).

Residues 166–168, Ser-195, and Ile-236 contribute to the NADP(+) site; that span reads GRS.

The protein belongs to the tetrahydrofolate dehydrogenase/cyclohydrolase family. Homodimer.

It catalyses the reaction (6R)-5,10-methylene-5,6,7,8-tetrahydrofolate + NADP(+) = (6R)-5,10-methenyltetrahydrofolate + NADPH. It carries out the reaction (6R)-5,10-methenyltetrahydrofolate + H2O = (6R)-10-formyltetrahydrofolate + H(+). It functions in the pathway one-carbon metabolism; tetrahydrofolate interconversion. In terms of biological role, catalyzes the oxidation of 5,10-methylenetetrahydrofolate to 5,10-methenyltetrahydrofolate and then the hydrolysis of 5,10-methenyltetrahydrofolate to 10-formyltetrahydrofolate. The chain is Bifunctional protein FolD from Chloroherpeton thalassium (strain ATCC 35110 / GB-78).